The chain runs to 494 residues: Glycerol kinase (494 aa).

ADP is bound at residue Thr12. Thr12, Thr13, and Ser14 together coordinate ATP. Sn-glycerol 3-phosphate is bound at residue Thr12. Residue Arg16 coordinates ADP. Sn-glycerol 3-phosphate is bound by residues Arg82, Glu83, Tyr134, and Asp243. Arg82, Glu83, Tyr134, Asp243, and Gln244 together coordinate glycerol. Residues Thr265 and Gly308 each contribute to the ADP site. ATP contacts are provided by Thr265, Gly308, Gln312, and Gly408. ADP-binding residues include Gly408 and Asn412.

The protein belongs to the FGGY kinase family.

The enzyme catalyses glycerol + ATP = sn-glycerol 3-phosphate + ADP + H(+). The protein operates within polyol metabolism; glycerol degradation via glycerol kinase pathway; sn-glycerol 3-phosphate from glycerol: step 1/1. With respect to regulation, inhibited by fructose 1,6-bisphosphate (FBP). In terms of biological role, key enzyme in the regulation of glycerol uptake and metabolism. Catalyzes the phosphorylation of glycerol to yield sn-glycerol 3-phosphate. The chain is Glycerol kinase from Marinomonas sp. (strain MWYL1).